The chain runs to 433 residues: 3-phosphoshikimate 1-carboxyvinyltransferase (433 aa).

3 residues coordinate 3-phosphoshikimate: lysine 15, serine 16, and arginine 20. Phosphoenolpyruvate is bound at residue lysine 15. Phosphoenolpyruvate contacts are provided by glycine 96 and arginine 124. 3-phosphoshikimate-binding residues include serine 169, glutamine 171, serine 195, aspartate 318, and lysine 345. A phosphoenolpyruvate-binding site is contributed by glutamine 171. Catalysis depends on aspartate 318, which acts as the Proton acceptor. The phosphoenolpyruvate site is built by arginine 349 and arginine 393.

This sequence belongs to the EPSP synthase family. In terms of assembly, monomer.

The protein resides in the cytoplasm. It catalyses the reaction 3-phosphoshikimate + phosphoenolpyruvate = 5-O-(1-carboxyvinyl)-3-phosphoshikimate + phosphate. Its pathway is metabolic intermediate biosynthesis; chorismate biosynthesis; chorismate from D-erythrose 4-phosphate and phosphoenolpyruvate: step 6/7. Catalyzes the transfer of the enolpyruvyl moiety of phosphoenolpyruvate (PEP) to the 5-hydroxyl of shikimate-3-phosphate (S3P) to produce enolpyruvyl shikimate-3-phosphate and inorganic phosphate. This is 3-phosphoshikimate 1-carboxyvinyltransferase from Chlorobium luteolum (strain DSM 273 / BCRC 81028 / 2530) (Pelodictyon luteolum).